The following is a 310-amino-acid chain: Cytochrome f (310 aa).

The signal sequence occupies residues 1–26; that stretch reads MNIKLTLLVLISIINLMIIQPIQTLA. Heme is bound by residues F27, C47, C50, and H51. A helical membrane pass occupies residues 276-296; that stretch reads IKGMIVFFFTVTIAQIFFVLK.

It belongs to the cytochrome f family. The 4 large subunits of the cytochrome b6-f complex are cytochrome b6, subunit IV (17 kDa polypeptide, petD), cytochrome f and the Rieske protein, while the 4 small subunits are PetG, PetL, PetM and PetN. The complex functions as a dimer. The cofactor is heme.

It localises to the plastid. It is found in the chloroplast thylakoid membrane. In terms of biological role, component of the cytochrome b6-f complex, which mediates electron transfer between photosystem II (PSII) and photosystem I (PSI), cyclic electron flow around PSI, and state transitions. This Gracilaria tenuistipitata var. liui (Red alga) protein is Cytochrome f.